A 418-amino-acid polypeptide reads, in one-letter code: Putative ion-transport protein YfeO (418 aa).

A run of 11 helical transmembrane segments spans residues 9-31 (MLLL…IVVM), 55-77 (SPLW…IRFS), 90-112 (LIGA…LGLA), 122-140 (PIMT…RLLP), 147-169 (WTIL…AALI), 189-211 (PLMA…FSLP), 223-244 (ILSG…VWCL), 259-281 (LVLG…VSLF), 301-323 (YFLL…FRGG), 343-363 (VPAV…VLVV), and 376-398 (VVVP…WLLL).

This sequence belongs to the chloride channel (TC 2.A.49) family.

Its subcellular location is the cell membrane. This is Putative ion-transport protein YfeO (yfeO) from Escherichia coli O157:H7.